The chain runs to 358 residues: Probable D-xylulose reductase A (358 aa).

Zn(2+) contacts are provided by cysteine 47, histidine 72, and glutamate 73. 182 to 187 (GAGPVG) is a binding site for NAD(+).

Belongs to the zinc-containing alcohol dehydrogenase family. Requires Zn(2+) as cofactor.

The enzyme catalyses xylitol + NAD(+) = D-xylulose + NADH + H(+). It participates in carbohydrate degradation; L-arabinose degradation via L-arabinitol; D-xylulose 5-phosphate from L-arabinose (fungal route): step 4/5. Functionally, xylitol dehydrogenase which catalyzes the conversion of xylitol to D-xylulose. Xylose is a major component of hemicelluloses such as xylan. Most fungi utilize D-xylose via three enzymatic reactions, xylose reductase (XR), xylitol dehydrogenase (XDH), and xylulokinase, to form xylulose 5-phosphate, which enters pentose phosphate pathway. The sequence is that of Probable D-xylulose reductase A (xdhA) from Aspergillus fumigatus (strain CBS 144.89 / FGSC A1163 / CEA10) (Neosartorya fumigata).